We begin with the raw amino-acid sequence, 165 residues long: Nascent polypeptide-associated complex subunit beta (165 aa).

Disordered stretches follow at residues 1-34 (MDQAKLARMQASVRIGGKGTPRRKVKKVHKTSGA) and 133-165 (QNMQKNQAGEKKDDDEDDIPDLVEGENFEKSVD). Basic residues predominate over residues 20 to 30 (TPRRKVKKVHK). Residues 33–110 (GADDKKLQAT…GEEKELTELV (78 aa)) form the NAC-A/B domain. Acidic residues predominate over residues 145–158 (DDDEDDIPDLVEGE).

It belongs to the NAC-beta family. Part of the nascent polypeptide-associated complex (NAC), consisting of egd2 and egd1. NAC associates with ribosomes via egd1.

It localises to the cytoplasm. Its subcellular location is the nucleus. In terms of biological role, component of the nascent polypeptide-associated complex (NAC), a dynamic component of the ribosomal exit tunnel, protecting the emerging polypeptides from interaction with other cytoplasmic proteins to ensure appropriate nascent protein targeting. The NAC complex also promotes mitochondrial protein import by enhancing productive ribosome interactions with the outer mitochondrial membrane and blocks the inappropriate interaction of ribosomes translating non-secretory nascent polypeptides with translocation sites in the membrane of the endoplasmic reticulum. EGD1 may act as a transcription factor that exert a negative effect on the expression of several genes that are transcribed by RNA polymerase II. The polypeptide is Nascent polypeptide-associated complex subunit beta (egd1) (Emericella nidulans (strain FGSC A4 / ATCC 38163 / CBS 112.46 / NRRL 194 / M139) (Aspergillus nidulans)).